Reading from the N-terminus, the 204-residue chain is Glycerol-3-phosphate acyltransferase (204 aa).

5 helical membrane passes run 12-32, 85-105, 117-137, 142-162, and 163-183; these read LVMG…HWLA, WQVA…WLGW, MLLG…LTVL, IVSL…ILRF, and QGNS…MVVW.

The protein belongs to the PlsY family. Probably interacts with PlsX.

It localises to the cell inner membrane. It catalyses the reaction an acyl phosphate + sn-glycerol 3-phosphate = a 1-acyl-sn-glycero-3-phosphate + phosphate. The protein operates within lipid metabolism; phospholipid metabolism. Functionally, catalyzes the transfer of an acyl group from acyl-phosphate (acyl-PO(4)) to glycerol-3-phosphate (G3P) to form lysophosphatidic acid (LPA). This enzyme utilizes acyl-phosphate as fatty acyl donor, but not acyl-CoA or acyl-ACP. The chain is Glycerol-3-phosphate acyltransferase from Prochlorococcus marinus (strain MIT 9313).